Here is a 518-residue protein sequence, read N- to C-terminus: Integrator complex subunit 14 (518 aa).

Residues 2–204 form the VWFA domain; sequence PTVVVMDVSL…KNVQSMFGKL (203 aa). Residues serine 10, serine 12, and threonine 86 each coordinate Mg(2+). The segment at 373 to 394 is disordered; it reads SDAKENPYGDDDNKSPFPLQPK. Basic and acidic residues predominate over residues 374-386; the sequence is DAKENPYGDDDNK.

Belongs to the Integrator subunit 14 family. In terms of assembly, component of the Integrator complex, composed of core subunits INTS1, INTS2, INTS3, INTS4, INTS5, INTS6, INTS7, INTS8, INTS9/RC74, INTS10, INTS11/CPSF3L, INTS12, INTS13, INTS14 and INTS15. The core complex associates with protein phosphatase 2A subunits PPP2CA and PPP2R1A, to form the Integrator-PP2A (INTAC) complex. INTS14 is part of the tail subcomplex, composed of INTS10, INTS13, INTS14 and INTS15.

The protein localises to the nucleus. Functionally, component of the integrator complex, a multiprotein complex that terminates RNA polymerase II (Pol II) transcription in the promoter-proximal region of genes. The integrator complex provides a quality checkpoint during transcription elongation by driving premature transcription termination of transcripts that are unfavorably configured for transcriptional elongation: the complex terminates transcription by (1) catalyzing dephosphorylation of the C-terminal domain (CTD) of Pol II subunit POLR2A/RPB1 and SUPT5H/SPT5, (2) degrading the exiting nascent RNA transcript via endonuclease activity and (3) promoting the release of Pol II from bound DNA. The integrator complex is also involved in terminating the synthesis of non-coding Pol II transcripts, such as enhancer RNAs (eRNAs), small nuclear RNAs (snRNAs), telomerase RNAs and long non-coding RNAs (lncRNAs). Within the integrator complex, INTS14 is part of the integrator tail module that acts as a platform for the recruitment of transcription factors at promoters. The chain is Integrator complex subunit 14 from Gallus gallus (Chicken).